A 122-amino-acid chain; its full sequence is Large ribosomal subunit protein uL14c (122 aa).

Belongs to the universal ribosomal protein uL14 family. Part of the 50S ribosomal subunit.

It is found in the plastid. Its subcellular location is the chloroplast. Its function is as follows. Binds to 23S rRNA. The protein is Large ribosomal subunit protein uL14c of Zygnema circumcarinatum (Green alga).